Consider the following 2067-residue polypeptide: Lipoxygenase homology domain-containing protein 1 (2067 aa).

PLAT domains follow at residues 43 to 160 (RVYE…RDLL), 172 to 287 (NKYE…RDIL), 296 to 412 (ITYI…RQLY), 425 to 540 (FPWS…REMT), 553 to 673 (ARYH…RELL), 684 to 803 (FRYH…VELY), 814 to 934 (VHYE…RELL), 969 to 1087 (TTFS…RDLF), 1100 to 1225 (VPYE…RELV), 1254 to 1372 (VLYS…RLFY), 1421 to 1539 (IPYY…RVFD), 1552 to 1667 (VLYE…CEMC), 1679 to 1797 (TSYT…RDFA), 1810 to 1931 (TTYE…VFEV), and 1948 to 2064 (VKYE…RDLF).

It localises to the cell projection. The protein resides in the stereocilium. Its function is as follows. Involved in hearing. Required for normal function of hair cells in the inner ear. This Homo sapiens (Human) protein is Lipoxygenase homology domain-containing protein 1 (LOXHD1).